The following is a 164-amino-acid chain: MAFRCTLRRLECYRASRLMPYKPSFLFSLISNVNEYERFVPFCQKSKVTEYDPKTGYPTKADLTVGFKGLCETFDSKVVCDPVALTVLADASHHRLFRRLKTHWSIEEASRGRVRVDLEVDFEFASKLHGMMSKFVGSSVASEIIQGFVQQAKIKHKLESENEK.

It belongs to the COQ10 family. In terms of assembly, interacts with coenzyme Q.

It localises to the mitochondrion inner membrane. Required for the function of coenzyme Q in the respiratory chain. May serve as a chaperone or may be involved in the transport of Q6 from its site of synthesis to the catalytic sites of the respiratory complexes. The protein is Coenzyme Q-binding protein coq10, mitochondrial of Schizosaccharomyces pombe (strain 972 / ATCC 24843) (Fission yeast).